A 232-amino-acid polypeptide reads, in one-letter code: MGKVAKRIKNIRKDINFNELYALKDAVSMVKERAIAKFDETIEISMNLGVDPRHADQMVRGVVHLPNGTGRNVRVAVFARGDKAEEAKTAGADIVGAEDLFESINGGAIDFDRCIATPDMMPLVGRLGKILGPRNLMPNPKVGTVTLDVANAVKASKGGAVEFRVEKAGIVHAGIGKASFGVEKIVENIKAFASAVIKAKPQGAKGEYIKRVAVSSTMGVGIKVDPATVRSE.

This sequence belongs to the universal ribosomal protein uL1 family. As to quaternary structure, part of the 50S ribosomal subunit.

Functionally, binds directly to 23S rRNA. The L1 stalk is quite mobile in the ribosome, and is involved in E site tRNA release. Protein L1 is also a translational repressor protein, it controls the translation of the L11 operon by binding to its mRNA. The chain is Large ribosomal subunit protein uL1 from Bartonella henselae (strain ATCC 49882 / DSM 28221 / CCUG 30454 / Houston 1) (Rochalimaea henselae).